A 787-amino-acid polypeptide reads, in one-letter code: Pleckstrin homology domain-containing family G member 6 (787 aa).

The region spanning 161–353 (HQQEALWELL…ESFLRHINGQ (193 aa)) is the DH domain. In terms of domain architecture, PH spans 409 to 509 (QLLLEGPVRV…WLEKTQHAQT (101 aa)). The segment at 533–762 (QGTESPSTRP…EPGNGKPRRL (230 aa)) is disordered. Residues 535 to 557 (TESPSTRPSTPSPSPEDSQSSAE) show a composition bias toward low complexity. A compositionally biased stretch (basic and acidic residues) spans 724 to 742 (LRPRSLREDMLREIREELA).

In terms of assembly, interacts with MYH10. Interacts with ELMO1 and EZR (in an open conformation). Interacts with CSPP1.

Its subcellular location is the cell projection. It localises to the microvillus. The protein resides in the cytoplasm. It is found in the cytoskeleton. The protein localises to the spindle. Its subcellular location is the cleavage furrow. In terms of biological role, guanine nucleotide exchange factor activating the small GTPase RHOA, which, in turn, induces myosin filament formation. Also activates RHOG. Does not activate RAC1, or to a much lower extent than RHOA and RHOG. Part of a functional unit, involving PLEKHG6, MYH10 and RHOA, at the cleavage furrow to advance furrow ingression during cytokinesis. In epithelial cells, required for the formation of microvilli and membrane ruffles on the apical pole. Along with EZR, required for normal macropinocytosis. The polypeptide is Pleckstrin homology domain-containing family G member 6 (Plekhg6) (Mus musculus (Mouse)).